A 511-amino-acid chain; its full sequence is Myrosinase 4 (511 aa).

The signal sequence occupies residues 1-23 (MAIPKAHYSLAVLVLLFVVVSSS). Intrachain disulfides connect C31/C450, C39/C445, and C230/C233. N46 and N53 each carry an N-linked (GlcNAc...) asparagine glycan. Residues Q64, H165, and 210–211 (NQ) contribute to the a beta-D-glucoside site. A beta-D-glucoside contacts are provided by Y351 and E418. E418 acts as the Nucleophile in catalysis. N428 carries an N-linked (GlcNAc...) asparagine glycan. A beta-D-glucoside is bound by residues W467, 474 to 475 (EF), and F483. N-linked (GlcNAc...) asparagine glycosylation occurs at N489.

This sequence belongs to the glycosyl hydrolase 1 family. Specifically expressed in roots.

The catalysed reaction is a thioglucoside + H2O = a sugar + a thiol.. The enzyme catalyses Hydrolysis of terminal, non-reducing beta-D-glucosyl residues with release of beta-D-glucose.. Its function is as follows. Hydrolyzes sinigrin and, with lower efficiency, p-nitrophenyl beta-D-glucoside. The chain is Myrosinase 4 from Arabidopsis thaliana (Mouse-ear cress).